The primary structure comprises 676 residues: Palmitoyl-CoA ligase FUM16 (676 aa).

Position 245–256 (245–256 (IMYTSGSTGLPN)) interacts with AMP. The tract at residues 552–655 (KLESIYRTSQ…SGLVTPTMKL (104 aa)) is AMP-binding.

Belongs to the ATP-dependent AMP-binding enzyme family.

It is found in the endoplasmic reticulum. The protein operates within mycotoxin biosynthesis. Functionally, palmitoyl-CoA ligase; part of the gene cluster that mediates the biosynthesis of fumonisins B1 (FB1), B2 (FB2), B3 (FB3), and B4 (FB4), which are carcinogenic mycotoxins. Plays a role in the synthesis of ceramide and is involved in self-protection from fumonisin B1 toxicity. The biosynthesis starts with the FUM1-catalyzed carbon chain assembly from one molecule of acetyl-CoA, eight molecules of malonyl-CoA, and two molecules of methionine (in S-adenosyl form). The C18 polyketide chain is released from the enzyme by a nucleophilic attack of a carbanion, which is derived from R-carbon of alanine by decarboxylation, on the carbonyl carbon of polyketide acyl chain. This step is catalyzed by the pyridoxal 5'-phosphate-dependent aminoacyl transferase FUM8. The resultant 3-keto intermediate is then stereospecifically reduced to a 3-hydroxyl product by reductase FUM13. Subsequent oxidations at C-10 by the cytochrome P450 monooxygenase FUM2, C-14 and C-15 by FUM6, FUM12 or FUM15, tricarballylic esterification of the hydroxyl groups on C-14 and C-15 by acyltransferase FUM14, and C-5 hydroxylation by 2-keto-glutarate-dependent dioxygenase FUM3 furnish the biosynthesis of fumonisins. The tricarballylic moieties are most likely derived from the citric acid cycle, and their addition to the carbon backbone may involve FUM7, FUM10, FUM11 and FUM14. The chain is Palmitoyl-CoA ligase FUM16 from Gibberella moniliformis (strain M3125 / FGSC 7600) (Maize ear and stalk rot fungus).